Consider the following 46-residue polypeptide: Lariatin (46 aa).

The propeptide occupies 1 to 26 (MTSQPSKKTYNAPSLVQRGKFARTTA). The segment at residues 27–34 (GSQLVYRE) is a cross-link (isoglutamyl glycine isopeptide (Gly-Glu)).

In terms of processing, the linear precursor LarA is probably cleaved by the putative peptidase LarD, generating linear 18-residue Lariatin-A or 20-residue Lariatin-B. These linear peptides are probably cross-linked by LarB. Finally, lariatins A and B may be exported by ABC transporter LarE.

Its function is as follows. Peptide antibiotic with selective activity against Mycobacterium species (M.smegmatis, MIC=3.13 ug/ml and M.tuberculosis, MIC=0.39 ug/ml). it is plausible that the target of lariatins lies within the cell wall in mycobacteria. Peptide antibiotic with selective activity against Mycobacterium species (M.smegmatis, MIC=6.25 ug/ml). This is Lariatin from Rhodococcus jostii.